Here is a 337-residue protein sequence, read N- to C-terminus: MRRKTLKYLTFFLLFIFLTSFVLNYSNTGVPSAWFPKQMLLELSENFRRFIKSQPCTCRHCISQDKVSYWFDQRFNKTMQPLLTVHNALMEEDTYRWWLRLQRERKPNNLSDTVKELFRLVPGNVDPMLNKRLVGCRRCAVVGNSGNLKDSSYGPEIDSHDFVLRMNKAPTVGFEADVGSRTTHHLVYPESFRELGENVNMVLVPFKTTDLQWVISATTTGTITHTYVPVPPKIKVKQEKILIYHPAFIKYVFDNWLQGHGRYPSTGILSIIFSIHICDEVDLYGFGADSKGNWHHYWENNPSAGAFRKTGVHDGDFEYNITTTLAAINKIRIFKGR.

Topologically, residues 1–4 (MRRK) are cytoplasmic. Residues 5–25 (TLKYLTFFLLFIFLTSFVLNY) form a helical; Signal-anchor for type II membrane protein membrane-spanning segment. Over 26–337 (SNTGVPSAWF…INKIRIFKGR (312 aa)) the chain is Lumenal. Cystine bridges form between Cys56–Cys61, Cys58–Cys136, and Cys139–Cys278. N-linked (GlcNAc...) asparagine glycosylation occurs at Asn76. Gln102 is a substrate binding site. The N-linked (GlcNAc...) asparagine glycan is linked to Asn109. Substrate contacts are provided by Asn144, Asn167, Tyr227, Tyr263, Gly267, Gly287, His296, and His313. Asn320 is a glycosylation site (N-linked (GlcNAc...) asparagine).

The protein belongs to the glycosyltransferase 29 family. In terms of processing, the soluble form derives from the membrane form by proteolytic processing. As to expression, highly expressed in submaxillary gland and to a much lesser extent in liver, lung, kidney, heart and brain.

It is found in the golgi apparatus. Its subcellular location is the golgi stack membrane. The protein localises to the trans-Golgi network membrane. It localises to the secreted. The catalysed reaction is a beta-D-galactosyl-(1-&gt;3)-N-acetyl-alpha-D-galactosaminyl derivative + CMP-N-acetyl-beta-neuraminate = an N-acetyl-alpha-neuraminyl-(2-&gt;3)-beta-D-galactosyl-(1-&gt;3)-N-acetyl-alpha-D-galactosaminyl derivative + CMP + H(+). It carries out the reaction a ganglioside GM1 (d18:1(4E)) + CMP-N-acetyl-beta-neuraminate = a ganglioside GD1a (d18:1(4E)) + CMP + H(+). The enzyme catalyses ganglioside GM1 (d18:1(4E)/18:0) + CMP-N-acetyl-beta-neuraminate = ganglioside GD1a (18:1(4E)/18:0) + CMP + H(+). It catalyses the reaction a ganglioside GA1 + CMP-N-acetyl-beta-neuraminate = a ganglioside GM1b + CMP + H(+). The catalysed reaction is a ganglioside GA1 (d18:1(4E)) + CMP-N-acetyl-beta-neuraminate = a ganglioside GM1b (d18:1(4E)) + CMP + H(+). It carries out the reaction a ganglioside GD1b + CMP-N-acetyl-beta-neuraminate = a ganglioside GT1b + CMP + H(+). The enzyme catalyses a 3-O-[beta-D-galactosyl-(1-&gt;3)-N-acetyl-alpha-D-galactosaminyl]-L-threonyl-[protein] + CMP-N-acetyl-beta-neuraminate = a 3-O-[N-acetyl-alpha-neuraminyl-(2-&gt;3)-beta-D-galactosyl-(1-&gt;3)-N-acetyl-alpha-D-galactosaminyl]-L-threonyl-[protein] + CMP + H(+). It catalyses the reaction a 3-O-[beta-D-galactosyl-(1-&gt;3)-N-acetyl-alpha-D-galactosaminyl]-L-seryl-[protein] + CMP-N-acetyl-beta-neuraminate = 3-O-[N-acetyl-alpha-neuraminyl-(2-&gt;3)-beta-D-galactosyl-(1-&gt;3)-N-acetyl-alpha-D-galactosaminyl]-L-seryl-[protein] + CMP + H(+). It participates in protein modification; protein glycosylation. The protein operates within glycolipid biosynthesis. Functionally, a beta-galactoside alpha2-&gt;3 sialyltransferase involved in terminal sialylation of glycoproteins and glycolipids. Catalyzes the transfer of sialic acid (N-acetyl-neuraminic acid; Neu5Ac) from the nucleotide sugar donor CMP-Neu5Ac onto acceptor Galbeta-(1-&gt;3)-GalNAc-terminated glycoconjugates through an alpha2-3 linkage. Adds sialic acid to the core 1 O-glycan, Galbeta-(1-&gt;3)-GalNAc-O-Ser/Thr, which is a major structure of mucin-type O-glycans. As part of a homeostatic mechanism that regulates CD8-positive T cell numbers, sialylates core 1 O-glycans of T cell glycoproteins, SPN/CD43 and PTPRC/CD45. Prevents premature apoptosis of thymic CD8-positive T cells prior to peripheral emigration, whereas in the secondary lymphoid organs controls the survival of CD8-positive memory T cells generated following a successful immune response. Transfers sialic acid to asialofetuin, presumably onto Galbeta-(1-&gt;3)-GalNAc-O-Ser. Sialylates GM1a, GA1 and GD1b gangliosides to form GD1a, GM1b and GT1b, respectively. In Mus musculus (Mouse), this protein is CMP-N-acetylneuraminate-beta-galactosamide-alpha-2,3-sialyltransferase 1 (St3gal1).